The primary structure comprises 188 residues: Josephin-2 (188 aa).

A Josephin domain is found at proline 11–aspartate 188. The Nucleophile role is filled by cysteine 24. Histidine 125 serves as the catalytic Proton acceptor.

The protein resides in the cytoplasm. Its subcellular location is the cytosol. It carries out the reaction Thiol-dependent hydrolysis of ester, thioester, amide, peptide and isopeptide bonds formed by the C-terminal Gly of ubiquitin (a 76-residue protein attached to proteins as an intracellular targeting signal).. Cleaves 'Lys-63'-linked poly-ubiquitin chains, and with lesser efficiency 'Lys-48'-linked poly-ubiquitin chains (in vitro). May act as a deubiquitinating enzyme. The protein is Josephin-2 (JOSD2) of Homo sapiens (Human).